The following is a 334-amino-acid chain: MEKNPQALVDGFNRKVDYLRMSVTDRCDFRCVYCMAEDMQFLPRQQILSLEELYQVAERFVALGTRKIRLTGGEPLVRQGIVELCGRIAALPGLRELCLTSNGSQLGRLAQPLFDAGVSRLNISLDSLDPERFRALTRTGDLKQVIAGIDAARAAGFRRTKLNAVVLKGRNDDEIVDLVRFAIDRELDISFIEEMPLGVISEHERGESFCSSDDVRNRLAEHFTLVESAESSQGPARYWRLAEAPSTRVGFISPHSHNFCATCNRVRLTVEGRLLLCLGNEHSVDLKQVLRQHPGDSARLEKAIRDAMQLKPYRHHFEVGGEVQILRFMNMTGG.

The Radical SAM core domain occupies 11 to 235; the sequence is GFNRKVDYLR…VESAESSQGP (225 aa). Arginine 20 contributes to the GTP binding site. Positions 27 and 31 each coordinate [4Fe-4S] cluster. Residue tyrosine 33 participates in S-adenosyl-L-methionine binding. Cysteine 34 is a [4Fe-4S] cluster binding site. Residue arginine 69 participates in GTP binding. Glycine 73 is an S-adenosyl-L-methionine binding site. Threonine 100 contributes to the GTP binding site. Residue serine 124 coordinates S-adenosyl-L-methionine. Lysine 161 serves as a coordination point for GTP. Methionine 195 is a binding site for S-adenosyl-L-methionine. Positions 260 and 263 each coordinate [4Fe-4S] cluster. 265–267 contacts GTP; sequence RVR. [4Fe-4S] cluster is bound at residue cysteine 277.

The protein belongs to the radical SAM superfamily. MoaA family. In terms of assembly, monomer and homodimer. It depends on [4Fe-4S] cluster as a cofactor.

The enzyme catalyses GTP + AH2 + S-adenosyl-L-methionine = (8S)-3',8-cyclo-7,8-dihydroguanosine 5'-triphosphate + 5'-deoxyadenosine + L-methionine + A + H(+). It functions in the pathway cofactor biosynthesis; molybdopterin biosynthesis. Its function is as follows. Catalyzes the cyclization of GTP to (8S)-3',8-cyclo-7,8-dihydroguanosine 5'-triphosphate. This is GTP 3',8-cyclase from Pseudomonas entomophila (strain L48).